A 186-amino-acid chain; its full sequence is Thiol:disulfide interchange protein CycY (186 aa).

The signal sequence occupies residues 1–20 (MGRYTLALLPLIVFGGIAHG). The Thioredoxin domain maps to 47-182 (DAEPAAARRA…LVPAMEKALG (136 aa)). A disulfide bridge connects residues C80 and C83.

This sequence belongs to the thioredoxin family. DsbE subfamily.

It localises to the periplasm. Functionally, required for disulfide bond formation in some periplasmic proteins. Also acts as a disulfide oxidoreductase in cytochromes c biogenesis. The cysteines of apocytochromes c must be in the reduced state for covalent linkage between the two moieties to occur. In Rhizobium leguminosarum bv. viciae, this protein is Thiol:disulfide interchange protein CycY (cycY).